We begin with the raw amino-acid sequence, 195 residues long: Thymidine kinase (195 aa).

Residues 15-22 (GSMFSGKS) and 88-91 (DEVQ) contribute to the ATP site. E89 (proton acceptor) is an active-site residue. Residues C145, C148, C183, and C186 each coordinate Zn(2+).

This sequence belongs to the thymidine kinase family. Homotetramer.

Its subcellular location is the cytoplasm. The catalysed reaction is thymidine + ATP = dTMP + ADP + H(+). The polypeptide is Thymidine kinase (Bacillus cereus (strain ZK / E33L)).